Here is a 309-residue protein sequence, read N- to C-terminus: MIVSAQQNPDVFTALRGRVTHAAPLAPQTWFRVGGQAETLFRPADTDDLCTLQRRVSNLVPMTIIGAASNLIIRDGGLPGITVKLGRGFNEITTDGDGMIAGAAALDATVAEHAAQAGLAGLEFLCGIPGTIGGAIAMNAGAYGSDIASVLDWVELALDGDIARLEASRLSLSYRHAALPPGCAVVRARLRTRPGNTADIIARMQDIRAARDAAQPVRARTGGSTFRNPDGQKAWELIDAAGCRGLSRGGAQVSEKHCNFLLNTGEATAADLEALGEEIRQRVQASCGTTLHWEIKRIGIPFHHPECQS.

In terms of domain architecture, FAD-binding PCMH-type spans 33 to 195 (VGGQAETLFR…VRARLRTRPG (163 aa)). Arg-175 is a catalytic residue. The active-site Proton donor is Ser-224. Residue Glu-294 is part of the active site.

Belongs to the MurB family. FAD serves as cofactor.

It localises to the cytoplasm. It catalyses the reaction UDP-N-acetyl-alpha-D-muramate + NADP(+) = UDP-N-acetyl-3-O-(1-carboxyvinyl)-alpha-D-glucosamine + NADPH + H(+). The protein operates within cell wall biogenesis; peptidoglycan biosynthesis. Functionally, cell wall formation. The polypeptide is UDP-N-acetylenolpyruvoylglucosamine reductase (Granulibacter bethesdensis (strain ATCC BAA-1260 / CGDNIH1)).